A 237-amino-acid polypeptide reads, in one-letter code: Endoglucanase-1 (237 aa).

The N-terminal stretch at methionine 1–alanine 16 is a signal peptide. Position 17 is a pyrrolidone carboxylic acid (glutamine 17).

The protein belongs to the glycosyl hydrolase 12 (cellulase H) family.

It localises to the secreted. The catalysed reaction is Endohydrolysis of (1-&gt;4)-beta-D-glucosidic linkages in cellulose, lichenin and cereal beta-D-glucans.. In Aspergillus aculeatus, this protein is Endoglucanase-1.